Consider the following 151-residue polypeptide: Nucleoside diphosphate kinase (151 aa).

ATP contacts are provided by Lys-11, Phe-59, Arg-87, Thr-93, Arg-104, and Asn-114. His-117 (pros-phosphohistidine intermediate) is an active-site residue.

It belongs to the NDK family. Homotetramer. Requires Mg(2+) as cofactor.

It is found in the cytoplasm. The enzyme catalyses a 2'-deoxyribonucleoside 5'-diphosphate + ATP = a 2'-deoxyribonucleoside 5'-triphosphate + ADP. The catalysed reaction is a ribonucleoside 5'-diphosphate + ATP = a ribonucleoside 5'-triphosphate + ADP. Major role in the synthesis of nucleoside triphosphates other than ATP. The ATP gamma phosphate is transferred to the NDP beta phosphate via a ping-pong mechanism, using a phosphorylated active-site intermediate. In Prochlorococcus marinus (strain SARG / CCMP1375 / SS120), this protein is Nucleoside diphosphate kinase.